Here is a 276-residue protein sequence, read N- to C-terminus: MKTSNTKTPKPVLIAGPCVIESLENLRSIAIKLQPLANNERLDFYFKASFDKANRTSLESYRGPGLEKGLEMLQTIKDEFGYKILTDVHESYQASVAAKVADILQIPAFLCRQTDLIVAVSQTDAIVNIKKGQFMNPKDMQYSVLKALKTRDSSIQSPAYETALKNGVWLCERGSSFGYGNLVVDMRSLTIMREFAPVIFDATHSVQMPGGANGKSSGDSSFAPILARAAAAVGIDGLFAETHVDPKNALSDGANMLKPDELEHLVTDMLKIQNLF.

It belongs to the KdsA family.

It is found in the cytoplasm. It carries out the reaction D-arabinose 5-phosphate + phosphoenolpyruvate + H2O = 3-deoxy-alpha-D-manno-2-octulosonate-8-phosphate + phosphate. Its pathway is carbohydrate biosynthesis; 3-deoxy-D-manno-octulosonate biosynthesis; 3-deoxy-D-manno-octulosonate from D-ribulose 5-phosphate: step 2/3. It participates in bacterial outer membrane biogenesis; lipopolysaccharide biosynthesis. This chain is 2-dehydro-3-deoxyphosphooctonate aldolase, found in Helicobacter pylori (strain P12).